Here is a 384-residue protein sequence, read N- to C-terminus: Protein NDRG1 (384 aa).

An N-acetylserine modification is found at serine 2. Serine 2, serine 319, and serine 326 each carry phosphoserine. Residues 325 to 384 (RSRTASGSSVTSLEGARSRSHTSEGTRSRSHTSEGTRLDIIPNSGGPGSSAGPNSTEVSC) are disordered. Positions 327 to 336 (RTASGSSVTS) are enriched in polar residues. Threonine 328 is subject to Phosphothreonine; by SGK1. 2 positions are modified to phosphoserine; by SGK1: serine 330 and serine 332. Serine 333 is subject to Phosphoserine. At threonine 335 the chain carries Phosphothreonine. Phosphoserine is present on residues serine 336 and serine 342. A run of 2 repeats spans residues 339–348 (GARSRSHTSE) and 349–358 (GTRSRSHTSE). Residues 339–358 (GARSRSHTSEGTRSRSHTSE) are 2 X 10 AA tandem repeats of G-[PST]-R-S-R-S-H-T-S-E. Over residues 345–361 (HTSEGTRSRSHTSEGTR) the composition is skewed to basic and acidic residues. Position 346 is a phosphothreonine; by SGK1 (threonine 346). Serine 352 is modified (phosphoserine). Threonine 356 is modified (phosphothreonine; by SGK1). The segment covering 374–384 (SAGPNSTEVSC) has biased composition (low complexity).

Belongs to the NDRG family. Interacts with RAB4A (membrane-bound form); the interaction involves NDRG1 in vesicular recycling of CDH1. Interacts with APOA1, APOA2, PRA1 and RTN1. Post-translationally, under stress conditions, phosphorylated in the C-terminal on many serine and threonine residues. Phosphorylated in vitro by PKA. Phosphorylation enhanced by increased intracellular cAMP levels. Homocysteine induces dephosphorylation. Phosphorylation by SGK1 is cell cycle dependent.

It localises to the cytoplasm. The protein localises to the cytosol. It is found in the cytoskeleton. The protein resides in the microtubule organizing center. Its subcellular location is the centrosome. It localises to the nucleus. The protein localises to the cell membrane. Stress-responsive protein involved in hormone responses, cell growth, and differentiation. Acts as a tumor suppressor in many cell types. Necessary but not sufficient for p53/TP53-mediated caspase activation and apoptosis. Has a role in cell trafficking notably of the Schwann cell and is necessary for the maintenance and development of the peripheral nerve myelin sheath. Required for vesicular recycling of CDH1 and TF. May also function in lipid trafficking. Protects cells from spindle disruption damage. Functions in p53/TP53-dependent mitotic spindle checkpoint. Regulates microtubule dynamics and maintains euploidy. This Bos taurus (Bovine) protein is Protein NDRG1 (NDRG1).